Consider the following 644-residue polypeptide: Biosynthetic arginine decarboxylase (644 aa).

The residue at position 105 (lysine 105) is an N6-(pyridoxal phosphate)lysine. 287-297 (LDVGGGLGIDY) is a binding site for substrate.

This sequence belongs to the Orn/Lys/Arg decarboxylase class-II family. SpeA subfamily. Mg(2+) is required as a cofactor. It depends on pyridoxal 5'-phosphate as a cofactor.

It catalyses the reaction L-arginine + H(+) = agmatine + CO2. In terms of biological role, catalyzes the biosynthesis of agmatine from arginine. This is Biosynthetic arginine decarboxylase from Parasynechococcus marenigrum (strain WH8102).